We begin with the raw amino-acid sequence, 75 residues long: Exodeoxyribonuclease 7 small subunit (75 aa).

The protein belongs to the XseB family. Heterooligomer composed of large and small subunits.

The protein resides in the cytoplasm. It carries out the reaction Exonucleolytic cleavage in either 5'- to 3'- or 3'- to 5'-direction to yield nucleoside 5'-phosphates.. In terms of biological role, bidirectionally degrades single-stranded DNA into large acid-insoluble oligonucleotides, which are then degraded further into small acid-soluble oligonucleotides. The sequence is that of Exodeoxyribonuclease 7 small subunit from Chlamydia felis (strain Fe/C-56) (Chlamydophila felis).